We begin with the raw amino-acid sequence, 431 residues long: MPAIVLIGAQWGDEGKGKATDLLGGRVQWVVRYQGGNNAGHTVVLPTGENFALHLIPSGILTPGVTNVIGNGVVVDPGVLLTELKGLEDRGVDTSNLLISADAHLLMPYHVAIDKVVERWAGSKKIGTTGRGIGPCYQDKIARIGIRVADVLDEQVLAEKIEAALEFKNQVLVKIYNRKALEPAEVLENLLEQAEGFKHRIADARLLLNQALENDEAVLLEGSQGTLLDVDHGTYPFVTSSNPTAGGAAVGSGIGPTRITTVLGILKAYTTRVGSGPFPTELFDEHGAYLAKTGGEVGVTTGRARRCGWFDAVIARYATRVNGITDYFLTKLDVLSSLETVPVCVGYTVDGKRVDEMPMTQSDIARAEPVYEELPGWWEDISGAREFEDLPAKARDYVLRLEELAGAYVSCIGVGPGRDQTIVRRDVLAAR.

GTP contacts are provided by residues 12-18 (GDEGKGK) and 40-42 (GHT). Asp13 (proton acceptor) is an active-site residue. Mg(2+) contacts are provided by Asp13 and Gly40. IMP-binding positions include 13 to 16 (DEGK), 38 to 41 (NAGH), Thr129, Arg143, Gln224, and Thr239. The active-site Proton donor is His41. Residue Lys292 forms an Isoglutamyl lysine isopeptide (Lys-Gln) (interchain with Q-Cter in protein Pup) linkage. 299 to 305 (VTTGRAR) is a binding site for substrate. Arg303 lines the IMP pocket. Residues Arg305, 331 to 333 (KLD), and 413 to 415 (GVG) contribute to the GTP site.

This sequence belongs to the adenylosuccinate synthetase family. As to quaternary structure, homodimer. It depends on Mg(2+) as a cofactor.

It localises to the cytoplasm. The enzyme catalyses IMP + L-aspartate + GTP = N(6)-(1,2-dicarboxyethyl)-AMP + GDP + phosphate + 2 H(+). It functions in the pathway purine metabolism; AMP biosynthesis via de novo pathway; AMP from IMP: step 1/2. In terms of biological role, plays an important role in the de novo pathway of purine nucleotide biosynthesis. Catalyzes the first committed step in the biosynthesis of AMP from IMP. This Mycolicibacterium smegmatis (strain ATCC 700084 / mc(2)155) (Mycobacterium smegmatis) protein is Adenylosuccinate synthetase.